Consider the following 55-residue polypeptide: Large ribosomal subunit protein bL33 (55 aa).

This sequence belongs to the bacterial ribosomal protein bL33 family.

The sequence is that of Large ribosomal subunit protein bL33 from Bartonella quintana (strain Toulouse) (Rochalimaea quintana).